Reading from the N-terminus, the 227-residue chain is Translation initiation factor 6 (227 aa).

It belongs to the eIF-6 family.

In terms of biological role, binds to the 50S ribosomal subunit and prevents its association with the 30S ribosomal subunit to form the 70S initiation complex. This is Translation initiation factor 6 from Methanococcus maripaludis (strain DSM 14266 / JCM 13030 / NBRC 101832 / S2 / LL).